Reading from the N-terminus, the 360-residue chain is Histidinol-phosphate aminotransferase (360 aa).

Lysine 218 is modified (N6-(pyridoxal phosphate)lysine).

It belongs to the class-II pyridoxal-phosphate-dependent aminotransferase family. Histidinol-phosphate aminotransferase subfamily. In terms of assembly, homodimer. It depends on pyridoxal 5'-phosphate as a cofactor.

The enzyme catalyses L-histidinol phosphate + 2-oxoglutarate = 3-(imidazol-4-yl)-2-oxopropyl phosphate + L-glutamate. The protein operates within amino-acid biosynthesis; L-histidine biosynthesis; L-histidine from 5-phospho-alpha-D-ribose 1-diphosphate: step 7/9. The sequence is that of Histidinol-phosphate aminotransferase from Chlorobium phaeobacteroides (strain DSM 266 / SMG 266 / 2430).